The following is a 593-amino-acid chain: La-related protein 7 (593 aa).

Polar residues predominate over residues 1 to 11 (MTAIETDTPSN). The segment at 1–28 (MTAIETDTPSNKVKEDESTDLRKDREKK) is disordered. The span at 12 to 24 (KVKEDESTDLRKD) shows a compositional bias: basic and acidic residues. The HTH La-type RNA-binding domain occupies 30 to 121 (RSRVKQLLAD…RRRFPLGEKP (92 aa)). Residues 127–205 (RTVYVELLPK…PRKAGMFPKT (79 aa)) form the RRM domain. The disordered stretch occupies residues 191 to 363 (PPEEAPRKAG…STEEEKDAVD (173 aa)). The segment covering 231-240 (KKKKKKKSKA) has biased composition (basic residues). The span at 248-259 (AEEDTKEQDMDI) shows a compositional bias: acidic residues. Composition is skewed to basic and acidic residues over residues 295–307 (ERAESFDQSEKVR), 314–340 (SSSEEHDCSSAKQKKSDTKDLPQDEKP), and 348–363 (QECKELSTEEEKDAVD). The xRRM domain maps to 461 to 574 (QFVCGVIGKI…TEKLIAKAEK (114 aa)).

It belongs to the LARP7 family. Core component of the 7SK RNP complex. Associates with box C/D small nucleolar ribonucleoprotein (snoRNP) complexes.

It is found in the nucleus. Its subcellular location is the nucleoplasm. RNA-binding protein that specifically binds distinct small nuclear RNA (snRNAs) and regulates their processing and function. Specifically binds the 7SK snRNA (7SK RNA) and acts as a core component of the 7SK ribonucleoprotein (RNP) complex, thereby acting as a negative regulator of transcription elongation by RNA polymerase II. The 7SK RNP complex sequesters the positive transcription elongation factor b (P-TEFb) in a large inactive 7SK RNP complex preventing RNA polymerase II phosphorylation and subsequent transcriptional elongation. The 7SK RNP complex also promotes snRNA gene transcription by RNA polymerase II via interaction with the little elongation complex (LEC). LARP7 specifically binds to the highly conserved 3'-terminal U-rich stretch of 7SK RNA; on stimulation, remains associated with 7SK RNA, whereas P-TEFb is released from the complex. LARP7 also acts as a regulator of mRNA splicing fidelity by promoting U6 snRNA processing. Specifically binds U6 snRNAs and associates with a subset of box C/D RNP complexes: promotes U6 snRNA 2'-O-methylation by facilitating U6 snRNA loading into box C/D RNP complexes. U6 snRNA 2'-O-methylation is required for mRNA splicing fidelity. The chain is La-related protein 7 from Xenopus tropicalis (Western clawed frog).